A 68-amino-acid polypeptide reads, in one-letter code: Glu S.griseus protease inhibitor (68 aa).

The residue at position 1 (S1) is an N-acetylserine. Cysteines 3 and 48 form a disulfide.

The protein belongs to the protease inhibitor I13 (potato type I serine protease inhibitor) family.

Its function is as follows. Competitively inhibits Glu S.griseus protease by forming probably a 1:1 complex. BGIA has no inhibitory activity against 2 other acidic amino acid-specific endopeptidases (S.aureus protease V8 and B.subtilis proteinase), chymotrypsin, trypsin, pancreatic elastase, and papain, although subtilisin Carlsberg was strongly inhibited. The sequence is that of Glu S.griseus protease inhibitor from Momordica charantia (Bitter gourd).